A 195-amino-acid polypeptide reads, in one-letter code: 4'-phosphopantetheinyl transferase AcpT (195 aa).

The protein belongs to the P-Pant transferase superfamily. Gsp/Sfp/HetI/AcpT family.

It catalyses the reaction apo-[ACP] + CoA = holo-[ACP] + adenosine 3',5'-bisphosphate + H(+). Its function is as follows. May be involved in an alternative pathway for phosphopantetheinyl transfer and holo-ACP synthesis in E.coli. The native apo-protein substrate is unknown. Is able to functionally replace AcpS in vivo but only when expressed at high levels. The sequence is that of 4'-phosphopantetheinyl transferase AcpT (acpT) from Escherichia coli O157:H7.